The primary structure comprises 863 residues: MGYDSQVRTKKRHRITVVCTNCKKRKSKCDRTKPCGTCVRLGDVDSCVYLTDSSGQPESSPSLNDADPLRKQSTPAERISPGFIKKRRSSQTRQDEDHWQRVRELESQSSLYYLPIHEETPFFIDLIPNGFYLETKRSADNLFGLFTDRAIENRDPYLQAMVTFRSIAIKKMMDKLGSNGNNVKNGSLPKSFEALSTFDADDERHISDDVVDKGNNFRMHQTIHKSLFNKFAQYRENNAKKFSSETILAKDYLPPLKILESEVLALFEEKIYNMIPIFDMKILRHEITIFYQNIVEKGNPISIKHYDHMVFCIILLIIKICRLSVQFSKLTPYIYPVLQEIDTSKFLALVKHYLFETKVLRKCNFLQLQCLILLRFLHWCAPEDGDGPETQYCQILMGTIISSCKEMGINWYCFSHPEKYSFKINRHTRPSYDIMKPSDYISVFRKIWSYVLFWDRKMCFISGEECQIGKTLQCHFKEEADTPTWYIRMLTLDNLMKKINDTLNDDPGKVDLNLLHRLINDLKRNFHILKSLSKNEKETMRHFDFEMEWIIDLFSLSLLHGEMIFYEYDCNITKFYKSFQDLWDMVIHISEKCYNYFFNSDALEVDSLTKFYTNRIVEIVANKVLVIVPAFILRGDRFKTIQYADKKKMIEFLYGVSSVYFNEFGFEYYRCFRKMFTAKIAYKILNRSCEKDAWRIILKFLLNELKLEDNGDSYIDYNDMRLKDICPIILEFQETVQKYDGYRPDILSIWNNEFYPIGKYNDDMTGFKFQMRIKEMQEFLDMEKYSDRFNIFSSFYDHASSQLAKHTEVDTNISITNEQVAETPQKELLQQPLAPALPVNDLIVSEFDVIEDIFDPVDFVSFF.

The segment at residues 19-47 (CTNCKKRKSKCDRTKPCGTCVRLGDVDSC) is a DNA-binding region (zn(2)-C6 fungal-type). The segment covering 52 to 63 (DSSGQPESSPSL) has biased composition (polar residues). The segment at 52–81 (DSSGQPESSPSLNDADPLRKQSTPAERISP) is disordered.

It belongs to the OAF3 family.

It is found in the cytoplasm. It localises to the nucleus. The protein localises to the mitochondrion. In terms of biological role, transcriptional inhibitor with a significantly increased number of target genes in response to oleate. In Saccharomyces cerevisiae (strain RM11-1a) (Baker's yeast), this protein is Oleate activated transcription factor 3 (OAF3).